We begin with the raw amino-acid sequence, 343 residues long: Ribosomal RNA small subunit methyltransferase C (343 aa).

Belongs to the methyltransferase superfamily. RsmC family. Monomer.

Its subcellular location is the cytoplasm. The catalysed reaction is guanosine(1207) in 16S rRNA + S-adenosyl-L-methionine = N(2)-methylguanosine(1207) in 16S rRNA + S-adenosyl-L-homocysteine + H(+). In terms of biological role, specifically methylates the guanine in position 1207 of 16S rRNA in the 30S particle. In Shigella boydii serotype 4 (strain Sb227), this protein is Ribosomal RNA small subunit methyltransferase C.